Reading from the N-terminus, the 365-residue chain is tRNA N6-adenosine threonylcarbamoyltransferase (365 aa).

His119 and His123 together coordinate Fe cation. Residues 141–145 (LVSGG), Asp174, Gly187, and Asn288 contribute to the substrate site. Asp316 contributes to the Fe cation binding site.

It belongs to the KAE1 / TsaD family. It depends on Fe(2+) as a cofactor.

The protein resides in the cytoplasm. The enzyme catalyses L-threonylcarbamoyladenylate + adenosine(37) in tRNA = N(6)-L-threonylcarbamoyladenosine(37) in tRNA + AMP + H(+). Its function is as follows. Required for the formation of a threonylcarbamoyl group on adenosine at position 37 (t(6)A37) in tRNAs that read codons beginning with adenine. Is involved in the transfer of the threonylcarbamoyl moiety of threonylcarbamoyl-AMP (TC-AMP) to the N6 group of A37, together with TsaE and TsaB. TsaD likely plays a direct catalytic role in this reaction. The chain is tRNA N6-adenosine threonylcarbamoyltransferase from Agrobacterium fabrum (strain C58 / ATCC 33970) (Agrobacterium tumefaciens (strain C58)).